A 487-amino-acid polypeptide reads, in one-letter code: Cysteine--tRNA ligase (487 aa).

Cys29 is a binding site for Zn(2+). Positions 31–41 (VTVYDYNHVGH) match the 'HIGH' region motif. Cys209, His234, and Glu238 together coordinate Zn(2+). The 'KMSKS' region motif lies at 266-270 (KMSKS). ATP is bound at residue Lys269.

The protein belongs to the class-I aminoacyl-tRNA synthetase family. Monomer. It depends on Zn(2+) as a cofactor.

Its subcellular location is the cytoplasm. It catalyses the reaction tRNA(Cys) + L-cysteine + ATP = L-cysteinyl-tRNA(Cys) + AMP + diphosphate. In Sulfurihydrogenibium sp. (strain YO3AOP1), this protein is Cysteine--tRNA ligase.